We begin with the raw amino-acid sequence, 142 residues long: Secreted acidic protein 1B (142 aa).

Acidic residues-rich tracts occupy residues 1-47 (SDDE…DDNE) and 54-64 (TNDDVDYGDGN). A disordered region spans residues 1–74 (SDDESGDDEN…DEAREIGDHS (74 aa)). Over 1 to 123 (SDDESGDDEN…YLRSGGSHFK (123 aa)) the chain is Extracellular. Positions 65–74 (DEAREIGDHS) are enriched in basic and acidic residues. A helical membrane pass occupies residues 124–141 (GQLLNITLGLGFCILFLL). Residue Leu142 is a topological domain, cytoplasmic.

Component of the acid-insoluble and acid-soluble organic matrix of the aragonitic skeleton (at protein level).

The protein localises to the membrane. This is Secreted acidic protein 1B from Acropora millepora (Staghorn coral).